A 373-amino-acid chain; its full sequence is tRNA-specific 2-thiouridylase MnmA (373 aa).

ATP-binding positions include 12-19 (GMSGGVDS) and M38. The segment at 98–100 (NPD) is interaction with target base in tRNA. Residue C103 is the Nucleophile of the active site. C103 and C200 are oxidised to a cystine. G127 contacts ATP. The interaction with tRNA stretch occupies residues 150–152 (KDQ). The Cysteine persulfide intermediate role is filled by C200. The interval 312–313 (RY) is interaction with tRNA.

This sequence belongs to the MnmA/TRMU family.

The protein resides in the cytoplasm. It carries out the reaction S-sulfanyl-L-cysteinyl-[protein] + uridine(34) in tRNA + AH2 + ATP = 2-thiouridine(34) in tRNA + L-cysteinyl-[protein] + A + AMP + diphosphate + H(+). In terms of biological role, catalyzes the 2-thiolation of uridine at the wobble position (U34) of tRNA, leading to the formation of s(2)U34. The protein is tRNA-specific 2-thiouridylase MnmA of Streptococcus thermophilus (strain ATCC BAA-491 / LMD-9).